The following is a 157-amino-acid chain: Phosphopantetheine adenylyltransferase (157 aa).

A substrate-binding site is contributed by S8. ATP is bound by residues S8–F9 and H16. K40, T72, and R86 together coordinate substrate. Residues G87–R89, E97, and Y122–S128 each bind ATP.

It belongs to the bacterial CoaD family. Homohexamer. It depends on Mg(2+) as a cofactor.

It localises to the cytoplasm. It catalyses the reaction (R)-4'-phosphopantetheine + ATP + H(+) = 3'-dephospho-CoA + diphosphate. It functions in the pathway cofactor biosynthesis; coenzyme A biosynthesis; CoA from (R)-pantothenate: step 4/5. In terms of biological role, reversibly transfers an adenylyl group from ATP to 4'-phosphopantetheine, yielding dephospho-CoA (dPCoA) and pyrophosphate. In Crocosphaera subtropica (strain ATCC 51142 / BH68) (Cyanothece sp. (strain ATCC 51142)), this protein is Phosphopantetheine adenylyltransferase.